The primary structure comprises 2287 residues: MKRHQFKSWIFELREIKNSHYFLDSWTKFDSVGSFTHIFFHQERFMKLFDPRIWSILLSRDSQGSTSNRYFTIKGVVLLVVVVLIYRINNRNMVERKNLYLMGLLPIPMNSIGPRNDTLEESFWSSNLNRLIVSLLYLPKGKKISESCFMDPKESTWVLPITKKCIMPESNWGSRWWRNRIGKKRDSSCKISNETVAGIEISFKEKDIKYLEFLFVSYTDDPIRKDHDWEFFDRLSPRKKRNIINLNSGQLFEILVKHLICYLMSAFREKRPIEVEGFFKQQGAEATIQSNDIEHVSHLFSRNKRGISLQNCAQFHMWQFRQDLFVSWGKNRHELDFLRNVSRENLIWLDNVWLVNKDRFFSKVRNVSSNIQYDSTRSIFVQVTDSSQLKGSSDQSRDPFDSISNEDSEYHTLINQTEIQQLKERSILWGPSFLQTERTEIESDRLLKCLSGYSSMSRLFTEREKQMNNHLLPEEIEEFLGNPTRSIRSFFSDRWSELHLGSNPTERSTRDHKLLKKQQDVSFVPSRRSENQEIVDIFKIITYLQNTVSIHPISSDPGCDMVPKDEPDMDSSNKISFLNKNPFLDLFHLFHDRNKGGYRLHHDFESEERFQEMADLFTLSITEPGLVDHKGFAFSIDSYGLDQKKFLNEVFNSRDESKKKSLLVLPPIFYEENESFYRRIRKKSVRISCGNDLEDPKPKIVVFANNNIMEAVNQYRLIRNLMQIQYSTYGYIRNVSNRFFLMNRSDRNFEYGIQRDQIGNDTLNHLTIIKYTINQHLSNLKKSQKKWFDPLISRTERSMNRDPDAYRYKWSNGSKNFQEHLEHFVSEQKHRFQVVFDRLRINQYSIDWSEVIDKQDLSKSLRFFLSKSLLFLSKSLLFLSKSLPFFFVSIGNIPIHRSEIHIYELKGPNDQLCNQLLESIGVQIVHLNKLKPFLLDDHDTSQRSKFLINGGTISPNKIPKWMIDSFHTRNNRRKSFENTDSYFSMISHDRDNWLNPVKPFHRSSLISSFYKANRLRFLNHPHHFWFYCNKGFPFYVEKTRINNYDLTYGQFLNILFIRNKIFSLCVGKKKHVFLERDTISPIESQVSDIFIPNDFPQSGDETYNLYKSFHFPIRSDPFVRRAIYSIADISGTPLTEEQIVNFERTYCQPLSDMNLSDSEGKNLHQYLSFNSNMGLIHTPCSEKYLPSGKRKKRSLCLKKCVEKRQMDRTFQRDSAFSNLSKWNLFQTYMPWFLTSTGCKYLNLTLLDTFSDPLPILSSSQKFVSIFHDIMHGSDISWPIPQKKLWAILPQWNLISESSSKCLQNLLLSEEMIHRNNESPVPLIWTHLRSPNAWEFLYSILFLFLVAGYLVRTHLLFVSRASSELQTGLERIKSLMIPSYMIELRKLLDRYPTSEPNSFWLKNLFLVALEQLGDSLEKIRGSASGGNMLLGGGPAYGVKSIRSKKKYLNINLIDLISIIPNPINRITFSRNTRHLSRTSKEIYSLIRKRKNVNGDWIDDKIESWVANSDSIDDEEREFLVQFSTLTTEKGIDQILLSLTHSDHLSKNDSGYQMIEQPGSIYLRYLVDIHKKYLMNYEFNRSCLAERRIFLAHYQTITYSQTSCGANSSHFPSHGKPFSLRLALSPSRGILVIGSIGTGRSYLVKYLATNSYVPFITVFPNKFLDDKPKGYRIDDIDIDDSDDIDIDDSDDIDDDLDTELLTMTNVLTMYMTPKIDRFDITLQFELAKAMSPCIIWIPNIHDLYVNESNYLSLGLLVNYLSRDCERCSTRNILVIASTHIPQKVDPALIAPNKSNTCIKIRRLLIPQQRKHFFILSYTRGFHLEKKMFHTNGFGSITMGSNARDLVALTNEALSISITQKKSIIDTNTIRSALHRQTWDLRSQVRSVQDHGILFYQIGRAVAQNVLLSNCPIDPISIYMKKKSCKEGDSYLYKWYFELGTSMKKLTILLYLLSCSAGSVAQDLWSPPGPDEKNWITSYGFVENDSDLVHGLLEVEGALLGSSRTEKDCSQFDNDRVTLFLRSEPRNPLDMMQNGSCSIVDQRFLYEKYESEFEEGEREGALDPQQIEEDLFNHIVWAPRIWRPCGNLFDCIERTNELGFPYWARSFRGKRIIYHKEDELQENDSEFLQSGTMQYQTRDRSSKEQGFFRISQFIWDPADPFFFLFKDQPFVSVFSRREFFADEEMSKGLITSQTNPPTSIYKRWFIKNTQEKHFELLIHRQRWLRTNSSLSNGSFRSNTPSESYQYLSNLFLSNGTLLDQIAKALLRKRWLFPDEMKHLIHVTGERFPIP.

1632–1639 (GSIGTGRS) is an ATP binding site.

This sequence belongs to the Ycf2 family.

The protein resides in the plastid. The protein localises to the chloroplast stroma. Probable ATPase of unknown function. Its presence in a non-photosynthetic plant (Epifagus virginiana) and experiments in tobacco indicate that it has an essential function which is probably not related to photosynthesis. In Calycanthus floridus var. glaucus (Eastern sweetshrub), this protein is Protein Ycf2.